The sequence spans 153 residues: MISQSTLFLFILLIIGLIAKNQSLTVAIGVLFLLKFTFLGDKVFPYLQTKGINLGVTVITIAVLVPIATGEIGFKQLGEAAKSYYAWIALASGVAVALLAKGGVQLLTTDPHITTALVFGTIIAVALFNGVAVGPLIGAGIAYAVMSIIQMFK.

Helical transmembrane passes span 8 to 28, 54 to 74, 87 to 107, and 117 to 137; these read FLFI…TVAI, LGVT…EIGF, WIAL…VQLL, and LVFG…GPLI.

It belongs to the UPF0756 family.

The protein resides in the cell membrane. This chain is UPF0756 membrane protein BA_4840/GBAA_4840/BAS4489, found in Bacillus anthracis.